The following is a 96-amino-acid chain: Co-chaperonin GroES (96 aa).

It belongs to the GroES chaperonin family. In terms of assembly, heptamer of 7 subunits arranged in a ring. Interacts with the chaperonin GroEL.

The protein localises to the cytoplasm. In terms of biological role, together with the chaperonin GroEL, plays an essential role in assisting protein folding. The GroEL-GroES system forms a nano-cage that allows encapsulation of the non-native substrate proteins and provides a physical environment optimized to promote and accelerate protein folding. GroES binds to the apical surface of the GroEL ring, thereby capping the opening of the GroEL channel. This Dechloromonas aromatica (strain RCB) protein is Co-chaperonin GroES.